Reading from the N-terminus, the 269-residue chain is Auxin-responsive protein IAA26 (269 aa).

Over residues 25 to 40 (YQEDKNNTDQEKKLEL) the composition is skewed to basic and acidic residues. 2 disordered regions span residues 25 to 55 (YQEDKNNTDQEKKLELRLGPPGGDEEDHSAI) and 76 to 146 (CFNG…KQVE). The EAR-like (transcriptional repression) signature appears at 38 to 42 (LELRL). Polar residues-rich tracts occupy residues 80–93 (NHFSPSNKTTSVPH) and 117–136 (LASTSSSKLGNESSHGGQIN). Over residues 137 to 146 (KSDDGEKQVE) the composition is skewed to basic and acidic residues. The region spanning 151–250 (GMFVKINMDG…SVKRLRVIKS (100 aa)) is the PB1 domain.

Belongs to the Aux/IAA family. Homodimers and heterodimers. Interacts with phytochrome A. Interacts with TPL.

It is found in the nucleus. Its function is as follows. Aux/IAA proteins are short-lived transcriptional factors that function as repressors of early auxin response genes at low auxin concentrations. Repression is thought to result from the interaction with auxin response factors (ARFs), proteins that bind to the auxin-responsive promoter element (AuxRE). Formation of heterodimers with ARF proteins may alter their ability to modulate early auxin response genes expression. In Arabidopsis thaliana (Mouse-ear cress), this protein is Auxin-responsive protein IAA26 (IAA26).